Consider the following 329-residue polypeptide: MDPTTPAWRTESTTMNGNDQALPLLCGKEILISVFLILFIALVGLVGNGFVLWLLGFRMRRNAFSVYVLSLAGADFLFLCFQIINCLVYLSNFFCSSSINFPSFFTTVMTCAYLAGLSMLSTISTERCLSVLWPIWYRCRRPRHLSAVACVLLWALSLLLSILEGKFCGLFGDGDSGWCQTFDLITAAWLIFLFMVLCGSSLALLVRILCGSRGLPLTRLYLTILLTVLVFLLCGLPFGIQWFLILWIWKNSDVLFCHIHPVSVVLSSLNSSANPIIYFFVGSFRKQWQLQQPILKLALQRALQDIAEVDHSEGCFRQGTPEMSRSSLV.

The Extracellular segment spans residues 1–33; it reads MDPTTPAWRTESTTMNGNDQALPLLCGKEILIS. Residues 34–54 traverse the membrane as a helical segment; the sequence is VFLILFIALVGLVGNGFVLWL. Residues 55–63 are Cytoplasmic-facing; it reads LGFRMRRNA. The helical transmembrane segment at 64–84 threads the bilayer; it reads FSVYVLSLAGADFLFLCFQII. Over 85 to 96 the chain is Extracellular; it reads NCLVYLSNFFCS. The chain crosses the membrane as a helical span at residues 97-117; sequence SSINFPSFFTTVMTCAYLAGL. Residues 118-144 lie on the Cytoplasmic side of the membrane; the sequence is SMLSTISTERCLSVLWPIWYRCRRPRH. A helical membrane pass occupies residues 145-165; it reads LSAVACVLLWALSLLLSILEG. Residues 166–183 are Extracellular-facing; the sequence is KFCGLFGDGDSGWCQTFD. A helical transmembrane segment spans residues 184 to 204; sequence LITAAWLIFLFMVLCGSSLAL. Residues 205 to 227 lie on the Cytoplasmic side of the membrane; the sequence is LVRILCGSRGLPLTRLYLTILLT. A helical membrane pass occupies residues 228–248; it reads VLVFLLCGLPFGIQWFLILWI. At 249–263 the chain is on the extracellular side; that stretch reads WKNSDVLFCHIHPVS. A helical membrane pass occupies residues 264 to 284; it reads VVLSSLNSSANPIIYFFVGSF. Over 285–329 the chain is Cytoplasmic; sequence RKQWQLQQPILKLALQRALQDIAEVDHSEGCFRQGTPEMSRSSLV.

This sequence belongs to the G-protein coupled receptor 1 family. Mas subfamily.

It localises to the cell membrane. In terms of biological role, mast cell-specific receptor for basic secretagogues, i.e. cationic amphiphilic drugs, as well as endo- or exogenous peptides, consisting of a basic head group and a hydrophobic core. Recognizes and binds small molecules containing a cyclized tetrahydroisoquinoline (THIQ), such as non-steroidal neuromuscular blocking drugs (NMBDs), including tubocurarine and atracurium. In response to these compounds, mediates pseudo-allergic reactions characterized by histamine release, inflammation and airway contraction. In Gorilla gorilla gorilla (Western lowland gorilla), this protein is Mas-related G-protein coupled receptor member X2 (MRGPRX2).